The following is a 226-amino-acid chain: Enolase-phosphatase E1 (226 aa).

The protein belongs to the HAD-like hydrolase superfamily. MasA/MtnC family. As to quaternary structure, monomer. Requires Mg(2+) as cofactor.

It catalyses the reaction 5-methylsulfanyl-2,3-dioxopentyl phosphate + H2O = 1,2-dihydroxy-5-(methylsulfanyl)pent-1-en-3-one + phosphate. Its pathway is amino-acid biosynthesis; L-methionine biosynthesis via salvage pathway; L-methionine from S-methyl-5-thio-alpha-D-ribose 1-phosphate: step 3/6. It functions in the pathway amino-acid biosynthesis; L-methionine biosynthesis via salvage pathway; L-methionine from S-methyl-5-thio-alpha-D-ribose 1-phosphate: step 4/6. Functionally, bifunctional enzyme that catalyzes the enolization of 2,3-diketo-5-methylthiopentyl-1-phosphate (DK-MTP-1-P) into the intermediate 2-hydroxy-3-keto-5-methylthiopentenyl-1-phosphate (HK-MTPenyl-1-P), which is then dephosphorylated to form the acireductone 1,2-dihydroxy-3-keto-5-methylthiopentene (DHK-MTPene). This chain is Enolase-phosphatase E1, found in Shewanella baltica (strain OS155 / ATCC BAA-1091).